We begin with the raw amino-acid sequence, 938 residues long: Histone deacetylase 7 (938 aa).

Positions 1-40 (MHSPGAGCPALQPDTPGSQPQPMDLRVGQRPTVEPPPEPA) are disordered. Positions 1 to 121 (MHSPGAGCPA…LAEVILKKQQ (121 aa)) are interaction with MEF2C. 2 transcription repression regions span residues 2–254 (HSPG…DGDR) and 241–533 (GPNP…EHAG). An interaction with MEF2A region spans residues 72-172 (SMDPPMPELQ…LPTEPPEHFP (101 aa)). At Ser132 the chain carries Phosphoserine. 4 disordered regions span residues 155 to 280 (SFLP…HHGL), 331 to 361 (SGSG…APLQ), 373 to 463 (LIKP…DSVL), and 472 to 491 (RPLS…LSPE). Position 178 is a phosphoserine; by MARK2, MARK3 and PKD/PRKD1 (Ser178). Residues 190–204 (KSLERRKNPLLRKES) show a composition bias toward basic and acidic residues. Phosphoserine; by PKD/PRKD2 is present on Ser204. Residues 220–235 (SSPSSSSTPASGCSSP) are compositionally biased toward low complexity. Ser344 is modified (phosphoserine; by PKD/PRKD1). 2 positions are modified to phosphoserine: Ser350 and Ser398. Residues 350–361 (SATASPLLAPLQ) are compositionally biased toward low complexity. Low complexity-rich tracts occupy residues 429–448 (GRGS…EQQH) and 479–491 (SSPA…LSPE). Ser479 carries the phosphoserine; by PKD/PRKD1 modification. Ser480 carries the post-translational modification Phosphoserine. The histone deacetylase stretch occupies residues 505–852 (PATGLVYDSV…VAALLGNKVD (348 aa)). Zn(2+) is bound by residues Cys520, Cys522, and His528. Ser582 carries the post-translational modification Phosphoserine. Cys605 lines the Zn(2+) pocket. His657 is a catalytic residue. The tract at residues 864–938 (NLSAIRSLEA…LVEEEEPMNL (75 aa)) is interaction with SIN3A. The Nuclear export signal signature appears at 904 to 938 (AEVEAVTALASLSVGILAEDRPSERLVEEEEPMNL).

The protein belongs to the histone deacetylase family. HD type 2 subfamily. Interacts with HDAC1, HDAC2, HDAC3, HDAC4, HDAC5, NCOR1, NCOR2, SIN3A, SIN3B, RBBP4, RBBP7, MTA1L1, SAP30 and MBD3. Interacts with KAT5 and EDNRA. Interacts with the 14-3-3 protein YWHAE, MEF2A, MEF2B and MEF2C. Interacts with ZMYND15. Interacts with KDM5B. Interacts with PML. Interacts with FOXP3. Interacts with RARA. May be phosphorylated by CaMK1. Phosphorylated by the PKC kinases PKN1 and PKN2, impairing nuclear import. Phosphorylation at Ser-178 by MARK2, MARK3 and PRKD1 promotes interaction with 14-3-3 proteins and export from the nucleus. Phosphorylation at Ser-178 is a prerequisite for phosphorylation at Ser-204. Highly expressed in heart and lung. Expressed at intermediate level in muscle.

It localises to the nucleus. The protein localises to the cytoplasm. It catalyses the reaction N(6)-acetyl-L-lysyl-[histone] + H2O = L-lysyl-[histone] + acetate. It carries out the reaction N(6)-acetyl-L-lysyl-[protein] + H2O = L-lysyl-[protein] + acetate. Its activity is regulated as follows. Its activity is inhibited by Trichostatin A (TSA), a known histone deacetylase inhibitor. Functionally, responsible for the deacetylation of lysine residues on the N-terminal part of the core histones (H2A, H2B, H3 and H4). Histone deacetylation gives a tag for epigenetic repression and plays an important role in transcriptional regulation, cell cycle progression and developmental events. Histone deacetylases act via the formation of large multiprotein complexes. Involved in muscle maturation by repressing transcription of myocyte enhancer factors such as MEF2A, MEF2B and MEF2C. During muscle differentiation, it shuttles into the cytoplasm, allowing the expression of myocyte enhancer factors. Positively regulates the transcriptional repressor activity of FOXP3. Serves as a corepressor of RARA, causing its deacetylation and inhibition of RARE DNA element binding. In association with RARA, plays a role in the repression of microRNA-10a and thereby in the inflammatory response. Also acetylates non-histone proteins, such as ALKBH5. In Mus musculus (Mouse), this protein is Histone deacetylase 7 (Hdac7).